We begin with the raw amino-acid sequence, 202 residues long: Lipid A acyltransferase PagP (202 aa).

The signal sequence occupies residues 1–25 (MNYKDIINACILSGVFLLHSPSALA). Catalysis depends on residues His74, Asp117, and Ser118.

The protein belongs to the lipid A palmitoyltransferase family. Homodimer.

It localises to the cell outer membrane. The catalysed reaction is a lipid A + a 1,2-diacyl-sn-glycero-3-phosphocholine = a hepta-acyl lipid A + a 2-acyl-sn-glycero-3-phosphocholine. It carries out the reaction a lipid IVA + a 1,2-diacyl-sn-glycero-3-phosphocholine = a lipid IVB + a 2-acyl-sn-glycero-3-phosphocholine. The enzyme catalyses a lipid IIA + a 1,2-diacyl-sn-glycero-3-phosphocholine = a lipid IIB + a 2-acyl-sn-glycero-3-phosphocholine. Transfers a fatty acid residue from the sn-1 position of a phospholipid to the N-linked hydroxyfatty acid chain on the proximal unit of lipid A or its precursors. This is Lipid A acyltransferase PagP from Yersinia pseudotuberculosis serotype IB (strain PB1/+).